A 178-amino-acid polypeptide reads, in one-letter code: Photosystem I assembly protein Ycf4 (178 aa).

Transmembrane regions (helical) follow at residues 19–39 (ILVA…SLSS) and 61–81 (LIMG…WAVI).

It belongs to the Ycf4 family.

The protein resides in the cellular thylakoid membrane. In terms of biological role, seems to be required for the assembly of the photosystem I complex. The sequence is that of Photosystem I assembly protein Ycf4 from Synechococcus sp. (strain CC9311).